The chain runs to 2200 residues: Bromodomain and WD repeat-containing DDB_G0285837 (2200 aa).

Disordered stretches follow at residues 137–178 (GFND…SNTN), 194–245 (VTPT…TTPP), and 259–288 (DIQQ…NNNN). Low complexity-rich tracts occupy residues 161 to 176 (NNNN…SNSN), 203 to 242 (NTTN…TTLT), and 259 to 273 (DIQQ…QQQQ). WD repeat units follow at residues 352 to 391 (GHKA…LIAT), 394 to 433 (GHLG…YDSI), 442 to 483 (SVNN…HVIS), 548 to 586 (GKTN…PKLV), 591 to 630 (GHPT…KWDH), 653 to 691 (RSKA…FHLE), 694 to 736 (EHTS…KKFV), and 741 to 780 (GFQC…DINN). 2 stretches are compositionally biased toward acidic residues: residues 918-933 (DDEI…EDFN) and 955-968 (QDDD…EDYD). Disordered regions lie at residues 918–1180 (DDEI…NHLT), 1262–1297 (NNNN…DDDD), 1461–1538 (ENNQ…NNNN), and 1662–1703 (NFNS…NNNN). Positions 974–1000 (MSTRKKSKIKADKRKKRLLKQSKKFTR) are enriched in basic residues. Positions 1052–1074 (GEIEMDDDDQYLNDNILDSDDND) are enriched in acidic residues. The segment covering 1109–1132 (SSDNSSENDSSANGSDSDYSGSKS) has biased composition (low complexity). The span at 1133-1164 (NKNKRGDKSKRNKKGKKNVKNKKVQKRGRKKS) shows a compositional bias: basic residues. Low complexity-rich tracts occupy residues 1262-1292 (NNNN…QQIN) and 1461-1525 (ENNQ…NSLN). A Bromo domain is found at 1722 to 1823 (EKIENLKKEM…HRISDILKEA (102 aa)). Positions 1850 to 2200 (DKDDSQLDDE…RGRGRPPKSN (351 aa)) are disordered. A compositionally biased stretch (low complexity) spans 1878-1888 (LANNNHGNNKS). A compositionally biased stretch (polar residues) spans 1910-1920 (TGKNITRSLLS). Over residues 1945–1958 (TTTTTTTTTTTSST) the composition is skewed to low complexity. 3 stretches are compositionally biased toward acidic residues: residues 2016–2028 (DYND…DNDG), 2057–2073 (EDED…EEDY), and 2104–2113 (SEEEEDEDQS). Positions 2114–2124 (DVNSNNNSDNE) are enriched in low complexity. Over residues 2125 to 2138 (SGGEDGYSGEDGSE) the composition is skewed to acidic residues. Over residues 2170 to 2185 (SFKNNNNNNNINNNVN) the composition is skewed to low complexity. A compositionally biased stretch (basic residues) spans 2190 to 2200 (KRGRGRPPKSN).

The protein is Bromodomain and WD repeat-containing DDB_G0285837 of Dictyostelium discoideum (Social amoeba).